Consider the following 168-residue polypeptide: S-ribosylhomocysteine lyase (168 aa).

The Fe cation site is built by histidine 54, histidine 58, and cysteine 128.

The protein belongs to the LuxS family. In terms of assembly, homodimer. Requires Fe cation as cofactor.

It catalyses the reaction S-(5-deoxy-D-ribos-5-yl)-L-homocysteine = (S)-4,5-dihydroxypentane-2,3-dione + L-homocysteine. In terms of biological role, involved in the synthesis of autoinducer 2 (AI-2) which is secreted by bacteria and is used to communicate both the cell density and the metabolic potential of the environment. The regulation of gene expression in response to changes in cell density is called quorum sensing. Catalyzes the transformation of S-ribosylhomocysteine (RHC) to homocysteine (HC) and 4,5-dihydroxy-2,3-pentadione (DPD). This chain is S-ribosylhomocysteine lyase, found in Mannheimia succiniciproducens (strain KCTC 0769BP / MBEL55E).